The sequence spans 212 residues: ER lumen protein-retaining receptor 1-A (212 aa).

At 1–4 the chain is on the lumenal side; that stretch reads MNIF. Residues 5 to 24 traverse the membrane as a helical segment; sequence RFLGDISHLSAIFILLLKIW. The Cytoplasmic portion of the chain corresponds to 25-32; that stretch reads KSRSCAGI. The chain crosses the membrane as a helical span at residues 33–52; the sequence is SGKSQLLFAIVFTARYLDLF. An interaction with the K-D-E-L motif on target proteins region spans residues 47 to 48; sequence RY. The Lumenal segment spans residues 53 to 58; that stretch reads TNYISF. Residues 59–79 traverse the membrane as a helical segment; that stretch reads YNTSMKVVYVASSYATVWMIY. Over 80-92 the chain is Cytoplasmic; the sequence is SKFKATYDGNHDT. The chain crosses the membrane as a helical span at residues 93-110; sequence FRVEFLIVPTAILAFLVN. Residues 111 to 116 lie on the Lumenal side of the membrane; it reads HDFTPL. Residues 117–135 form a helical membrane-spanning segment; that stretch reads EIFWTFSIYLESVAILPQL. Residues 136 to 149 lie on the Cytoplasmic side of the membrane; sequence FMVSKTGEAETITS. A helical transmembrane segment spans residues 150–168; it reads HYLFALGIYRTLYLFNWIW. The interaction with the K-D-E-L motif on target proteins stretch occupies residues 159-169; that stretch reads RTLYLFNWIWR. At 169–178 the chain is on the lumenal side; sequence RYQFEGFFDL. Residues 179–199 traverse the membrane as a helical segment; it reads IAIVAGLVQTVLYCDFFYLYV. The Cytoplasmic portion of the chain corresponds to 200-212; that stretch reads TKVLKGKKLSLPA. The segment at 204–207 is important for recycling of cargo proteins with the sequence motif K-D-E-L from the Golgi to the endoplasmic reticulum; the sequence is KGKK.

Belongs to the ERD2 family.

Its subcellular location is the golgi apparatus membrane. It is found in the cytoplasmic vesicle. The protein resides in the COPI-coated vesicle membrane. The protein localises to the endoplasmic reticulum membrane. It localises to the endoplasmic reticulum-Golgi intermediate compartment membrane. Functionally, receptor for the C-terminal sequence motif K-D-E-L that is present on endoplasmic reticulum resident proteins and that mediates their recycling from the Golgi back to the endoplasmic reticulum. This Xenopus laevis (African clawed frog) protein is ER lumen protein-retaining receptor 1-A (kdelr1-a).